We begin with the raw amino-acid sequence, 1123 residues long: Telomerase reverse transcriptase (1123 aa).

Disordered regions lie at residues 191 to 242 and 410 to 439; these read ENKR…KTTK and GTTS…PKCP. Over residues 201-210 the composition is skewed to polar residues; it reads QPPTKRQWLS. The 334-residue stretch at 596 to 929 folds into the Reverse transcriptase domain; the sequence is LVDDAEAESS…PFVRWTGLLI (334 aa). 3 residues coordinate Mg(2+): D691, D860, and D861.

Belongs to the reverse transcriptase family. Telomerase subfamily. As to quaternary structure, component of the telomerase ribonucleoprotein complex. Interacts with POT1A.

It is found in the nucleus. The protein resides in the chromosome. The protein localises to the telomere. The catalysed reaction is DNA(n) + a 2'-deoxyribonucleoside 5'-triphosphate = DNA(n+1) + diphosphate. Its function is as follows. Telomerase is a ribonucleoprotein enzyme essential for the replication of chromosome termini in most eukaryotes. It elongates telomeres. It is a reverse transcriptase that adds simple sequence repeats to chromosome ends by copying a template sequence within the RNA component of the enzyme. Required to prevent genome instability induced by breakage-fusion-bridge (BFB) cycles. Can extend completely non-telomeric sequences using RNA template in vitro. The sequence is that of Telomerase reverse transcriptase (TERT) from Arabidopsis thaliana (Mouse-ear cress).